The following is a 685-amino-acid chain: Keratin, type II cytoskeletal 2 epidermal (685 aa).

The disordered stretch occupies residues 1-20 (MSCQISCKSRRGGGGGGGGG). Residues 1 to 196 (MSCQISCKSR…DPEIQNVKSQ (196 aa)) are head. At Arg-22 the chain carries Asymmetric dimethylarginine. Ser-25 and Ser-28 each carry phosphoserine. Position 52 is an omega-N-methylarginine (Arg-52). Position 64 is a phosphoserine (Ser-64). Residues 197–232 (EREQIKTLNNKFASFIDTVRFLEQQNQVLHTKWELL) form a coil 1A region. The IF rod domain maps to 197–511 (EREQIKTLNN…KLLEGEECRM (315 aa)). The linker 1 stretch occupies residues 233–251 (QQLDVGTRTTNLDPVFQAY). The segment at 252 to 343 (IGILKKQVDR…TLYDTELSQL (92 aa)) is coil 1B. Residues 344–367 (QQNVTDTNVILSMDNNRNLDLDSI) form a linker 12 region. Residues 368–507 (IAEVQSQYEI…ATYRKLLEGE (140 aa)) form a coil 2 region. The tail stretch occupies residues 508 to 685 (ECRMSGDFSD…CGSGVTFSFR (178 aa)). Residues 532–685 (VASKAGFGSG…CGSGVTFSFR (154 aa)) are disordered. Positions 538 to 678 (FGSGGQSSGG…GSGSGEGCGS (141 aa)) are enriched in gly residues. Omega-N-methylarginine occurs at positions 554, 588, 603, and 653.

This sequence belongs to the intermediate filament family. In terms of assembly, heterotetramer of two type I and two type II keratins. Associates with KRT10.

It localises to the cytoplasm. Its function is as follows. Probably contributes to terminal cornification. Associated with keratinocyte activation, proliferation and keratinization. Required for maintenance of corneocytes and keratin filaments in suprabasal keratinocytes in the epidermis of the ear, potentially via moderation of expression and localization of keratins and their partner proteins. Plays a role in the establishment of the epidermal barrier on plantar skin. The chain is Keratin, type II cytoskeletal 2 epidermal from Rattus norvegicus (Rat).